Here is a 62-residue protein sequence, read N- to C-terminus: Venom protein 51.1 (62 aa).

An N-terminal signal peptide occupies residues 1 to 25 (MKFFGILLIVTMVVLVMIATTYVES). Cystine bridges form between Cys-32–Cys-53, Cys-39–Cys-58, and Cys-43–Cys-60.

As to expression, expressed by the venom gland.

The protein localises to the secreted. Neurotoxin. Decreases the action potential of myelinated nerves in mice and frogs. The protein is Venom protein 51.1 of Lychas mucronatus (Chinese swimming scorpion).